The primary structure comprises 573 residues: Trehalose synthase (573 aa).

A substrate-binding site is contributed by Asp-70. Residue Asn-112 participates in Ca(2+) binding. The substrate site is built by His-113 and Gln-178. Asp-180 serves as a coordination point for Ca(2+). Arg-208 serves as a coordination point for substrate. The active-site Nucleophile is the Asp-210. 3 residues coordinate Ca(2+): Tyr-214, Leu-215, and Glu-217. Glu-252 acts as the Proton donor in catalysis. Residues His-326 and Asp-327 each contribute to the substrate site.

The protein belongs to the glycosyl hydrolase 13 family. TreS subfamily.

The enzyme catalyses D-maltose = alpha,alpha-trehalose. Its function is as follows. Catalyzes the reversible interconversion of maltose and alpha,alpha-trehalose by transglucosylation. The polypeptide is Trehalose synthase (treS) (Pimelobacter sp. (strain R48)).